Here is a 187-residue protein sequence, read N- to C-terminus: Peptidyl-tRNA hydrolase (187 aa).

Tyr15 is a tRNA binding site. The active-site Proton acceptor is His20. TRNA-binding residues include Tyr64, Asn66, and Asn112.

This sequence belongs to the PTH family. As to quaternary structure, monomer.

It localises to the cytoplasm. It catalyses the reaction an N-acyl-L-alpha-aminoacyl-tRNA + H2O = an N-acyl-L-amino acid + a tRNA + H(+). Functionally, hydrolyzes ribosome-free peptidyl-tRNAs (with 1 or more amino acids incorporated), which drop off the ribosome during protein synthesis, or as a result of ribosome stalling. Catalyzes the release of premature peptidyl moieties from peptidyl-tRNA molecules trapped in stalled 50S ribosomal subunits, and thus maintains levels of free tRNAs and 50S ribosomes. The chain is Peptidyl-tRNA hydrolase from Phocaeicola vulgatus (strain ATCC 8482 / DSM 1447 / JCM 5826 / CCUG 4940 / NBRC 14291 / NCTC 11154) (Bacteroides vulgatus).